The sequence spans 1083 residues: Carbamoyl phosphate synthase large chain (1083 aa).

The interval 1 to 402 is carboxyphosphate synthetic domain; sequence MPKRTDIRKV…AYMKALRSME (402 aa). ATP contacts are provided by Arg-129, Arg-169, Gly-175, Gly-176, Glu-208, Val-210, Glu-215, Gly-241, Val-242, His-243, Gln-285, and Glu-299. Positions 133–328 constitute an ATP-grasp 1 domain; that stretch reads KAAMQKIGVA…IAKIAAKLAL (196 aa). Gln-285, Glu-299, and Asn-301 together coordinate Mg(2+). Gln-285, Glu-299, and Asn-301 together coordinate Mn(2+). An oligomerization domain region spans residues 403-554; the sequence is LGRVGLESPE…YSTYEEEDEA (152 aa). Residues 555–937 are carbamoyl phosphate synthetic domain; the sequence is PPTDRQKVLI…AFAKSQLAAG (383 aa). Residues 679-871 enclose the ATP-grasp 2 domain; the sequence is AALIEKLGLK…MAKIAALCMV (193 aa). ATP is bound by residues Arg-715, Arg-754, Leu-756, Glu-761, Gly-787, Val-788, His-789, Ser-790, Gln-830, and Glu-842. Mg(2+)-binding residues include Gln-830, Glu-842, and Asn-844. Gln-830, Glu-842, and Asn-844 together coordinate Mn(2+). Positions 938–1078 constitute an MGS-like domain; the sequence is VKLPKSGKVF…QEYLGINAAP (141 aa). Residues 938–1083 are allosteric domain; sequence VKLPKSGKVF…INAAPPGTRR (146 aa).

The protein belongs to the CarB family. As to quaternary structure, composed of two chains; the small (or glutamine) chain promotes the hydrolysis of glutamine to ammonia, which is used by the large (or ammonia) chain to synthesize carbamoyl phosphate. Tetramer of heterodimers (alpha,beta)4. Requires Mg(2+) as cofactor. Mn(2+) is required as a cofactor.

It carries out the reaction hydrogencarbonate + L-glutamine + 2 ATP + H2O = carbamoyl phosphate + L-glutamate + 2 ADP + phosphate + 2 H(+). The enzyme catalyses hydrogencarbonate + NH4(+) + 2 ATP = carbamoyl phosphate + 2 ADP + phosphate + 2 H(+). It participates in amino-acid biosynthesis; L-arginine biosynthesis; carbamoyl phosphate from bicarbonate: step 1/1. Its pathway is pyrimidine metabolism; UMP biosynthesis via de novo pathway; (S)-dihydroorotate from bicarbonate: step 1/3. Its function is as follows. Large subunit of the glutamine-dependent carbamoyl phosphate synthetase (CPSase). CPSase catalyzes the formation of carbamoyl phosphate from the ammonia moiety of glutamine, carbonate, and phosphate donated by ATP, constituting the first step of 2 biosynthetic pathways, one leading to arginine and/or urea and the other to pyrimidine nucleotides. The large subunit (synthetase) binds the substrates ammonia (free or transferred from glutamine from the small subunit), hydrogencarbonate and ATP and carries out an ATP-coupled ligase reaction, activating hydrogencarbonate by forming carboxy phosphate which reacts with ammonia to form carbamoyl phosphate. This chain is Carbamoyl phosphate synthase large chain, found in Myxococcus xanthus (strain DK1622).